Consider the following 79-residue polypeptide: Protein SIP18 (79 aa).

The interval 1–79 is disordered; the sequence is MSNMMNKFAE…DWKTYENMKK (79 aa). A compositionally biased stretch (basic and acidic residues) spans 8-20; that stretch reads FAEKLQGNDDSHQ.

This is Protein SIP18 (SIP18) from Saccharomyces cerevisiae (strain ATCC 204508 / S288c) (Baker's yeast).